Reading from the N-terminus, the 215-residue chain is Cytidylate kinase (215 aa).

Position 10–18 (10–18 (GPAASGKGT)) interacts with ATP.

It belongs to the cytidylate kinase family. Type 1 subfamily.

The protein localises to the cytoplasm. It carries out the reaction CMP + ATP = CDP + ADP. The catalysed reaction is dCMP + ATP = dCDP + ADP. This chain is Cytidylate kinase, found in Bartonella bacilliformis (strain ATCC 35685 / KC583 / Herrer 020/F12,63).